The following is a 432-amino-acid chain: Adenylosuccinate synthetase (432 aa).

GTP is bound by residues 13 to 19 and 41 to 43; these read GDEGKGK and GHT. Asp14 functions as the Proton acceptor in the catalytic mechanism. Mg(2+)-binding residues include Asp14 and Gly41. IMP contacts are provided by residues 14–17, 39–42, Thr130, Arg144, Gln225, Thr240, and Arg304; these read DEGK and NAGH. The Proton donor role is filled by His42. 300 to 306 contacts substrate; that stretch reads AVTGRPR. GTP contacts are provided by residues Arg306, 332-334, and 415-417; these read KLD and STG.

The protein belongs to the adenylosuccinate synthetase family. In terms of assembly, homodimer. It depends on Mg(2+) as a cofactor.

It localises to the cytoplasm. The catalysed reaction is IMP + L-aspartate + GTP = N(6)-(1,2-dicarboxyethyl)-AMP + GDP + phosphate + 2 H(+). It functions in the pathway purine metabolism; AMP biosynthesis via de novo pathway; AMP from IMP: step 1/2. Plays an important role in the de novo pathway of purine nucleotide biosynthesis. Catalyzes the first committed step in the biosynthesis of AMP from IMP. In Histophilus somni (strain 129Pt) (Haemophilus somnus), this protein is Adenylosuccinate synthetase.